The following is a 354-amino-acid chain: Phospho-N-acetylmuramoyl-pentapeptide-transferase (354 aa).

10 consecutive transmembrane segments (helical) span residues 16–36 (YITVRAGIAFFFAFFLTLYLM), 66–86 (TPTMGGVVFIFSALLASLLTV), 88–108 (IHNPYVLGGFLTILGFLAIGV), 130–150 (FFLQILVAFVVSLFLYEYAHL), 168–188 (IFGILFWTLVIVATSNAVNLT), 193–213 (GLATVPSIMALTTLAIITYIT), 227–247 (IIGVGEVSIIAAAFAGSLIGF), 257–277 (VFMGDSGSLTLGAFIGYMAII), 282–302 (VLLILIGFVFVMEALSVIIQV), and 331–351 (KIIVRFWIIALISNLIALITL).

The protein belongs to the glycosyltransferase 4 family. MraY subfamily. Mg(2+) is required as a cofactor.

The protein localises to the cell inner membrane. It carries out the reaction UDP-N-acetyl-alpha-D-muramoyl-L-alanyl-gamma-D-glutamyl-meso-2,6-diaminopimeloyl-D-alanyl-D-alanine + di-trans,octa-cis-undecaprenyl phosphate = di-trans,octa-cis-undecaprenyl diphospho-N-acetyl-alpha-D-muramoyl-L-alanyl-D-glutamyl-meso-2,6-diaminopimeloyl-D-alanyl-D-alanine + UMP. It functions in the pathway cell wall biogenesis; peptidoglycan biosynthesis. Catalyzes the initial step of the lipid cycle reactions in the biosynthesis of the cell wall peptidoglycan: transfers peptidoglycan precursor phospho-MurNAc-pentapeptide from UDP-MurNAc-pentapeptide onto the lipid carrier undecaprenyl phosphate, yielding undecaprenyl-pyrophosphoryl-MurNAc-pentapeptide, known as lipid I. The chain is Phospho-N-acetylmuramoyl-pentapeptide-transferase from Nitratiruptor sp. (strain SB155-2).